Here is a 513-residue protein sequence, read N- to C-terminus: 2,3-bisphosphoglycerate-independent phosphoglycerate mutase (513 aa).

Asp-15 and Ser-65 together coordinate Mn(2+). Catalysis depends on Ser-65, which acts as the Phosphoserine intermediate. Substrate is bound by residues His-126, 156 to 157 (RD), Arg-188, Arg-194, 263 to 266 (RADR), and Lys-337. Mn(2+) is bound by residues Asp-402, His-406, Asp-443, His-444, and His-461.

The protein belongs to the BPG-independent phosphoglycerate mutase family. In terms of assembly, monomer. Requires Mn(2+) as cofactor.

The catalysed reaction is (2R)-2-phosphoglycerate = (2R)-3-phosphoglycerate. Its pathway is carbohydrate degradation; glycolysis; pyruvate from D-glyceraldehyde 3-phosphate: step 3/5. Functionally, catalyzes the interconversion of 2-phosphoglycerate and 3-phosphoglycerate. The chain is 2,3-bisphosphoglycerate-independent phosphoglycerate mutase from Moorella thermoacetica (strain ATCC 39073 / JCM 9320).